The chain runs to 273 residues: Coiled-coil domain-containing protein 3 (273 aa).

Residues 1–21 (MPLPLLLAALCLAASPAPARA) form the signal peptide. The N-linked (GlcNAc...) asparagine glycan is linked to Asn-100. Residues 188–250 (SVQKALFEEE…VNQKLNEKLG (63 aa)) adopt a coiled-coil conformation.

Homodimer. N-glycosylated. Expressed in aorta and adipose tissue. Enriched in mature adipocytes. Over-expressed in adipose tissue from either hormonally-induced or nutritionally-regulated obese mice models.

It localises to the secreted. In terms of biological role, negatively regulates TNF-alpha-induced pro-inflammatory response in endothelial cells (ECs) via inhibition of TNF-alpha-induced NF-kappaB activation in ECs. Positively regulates lipid accumulation in adipose cells. This chain is Coiled-coil domain-containing protein 3 (Ccdc3), found in Mus musculus (Mouse).